A 459-amino-acid polypeptide reads, in one-letter code: cAMP-dependent protein kinase regulatory subunit (459 aa).

The interval 30–219 is dimerization and phosphorylation; it reads QFCANYFNTK…TLANNLKNNF (190 aa). Disordered stretches follow at residues 78-109 and 125-168; these read VNDR…DTKT and FDVK…PSSK. Positions 95 to 109 are enriched in basic and acidic residues; it reads HSNHDEDPHAKDTKT. A compositionally biased stretch (low complexity) spans 146 to 168; that stretch reads KPSSSSQPNQQSASASSKTPSSK. Serine 180 carries the post-translational modification Phosphoserine. 3',5'-cyclic AMP is bound by residues 220-335, glutamate 285, arginine 294, 338-454, glutamate 404, and arginine 413; these read LFKQ…FLKD and VLKS…KSQD.

This sequence belongs to the cAMP-dependent kinase regulatory chain family. In terms of assembly, tetramer, composed of 2 regulatory (R) and 2 catalytic (C) subunits. In the presence of cAMP it dissociates into 2 active monomeric C subunits and an R dimer.

In Candida albicans (strain SC5314 / ATCC MYA-2876) (Yeast), this protein is cAMP-dependent protein kinase regulatory subunit (BCY1).